Consider the following 742-residue polypeptide: Protein CdcH (742 aa).

Residues glycine 230–threonine 237 and glycine 503–threonine 510 contribute to the ATP site. The segment at phenylalanine 722–glutamine 742 is disordered. Positions lysine 723–glutamine 734 are enriched in polar residues.

The protein belongs to the AAA ATPase family. CDC48 subfamily.

Its function is as follows. May be part of a transduction pathway connecting light to cell division. The chain is Protein CdcH (cdcH) from Halobacterium salinarum (strain ATCC 700922 / JCM 11081 / NRC-1) (Halobacterium halobium).